Consider the following 273-residue polypeptide: Glutamate 5-kinase (273 aa).

K15 contributes to the ATP binding site. S55, D142, and N158 together coordinate substrate. ATP is bound by residues S178–D179 and T220–K226.

It belongs to the glutamate 5-kinase family.

It is found in the cytoplasm. The catalysed reaction is L-glutamate + ATP = L-glutamyl 5-phosphate + ADP. The protein operates within amino-acid biosynthesis; L-proline biosynthesis; L-glutamate 5-semialdehyde from L-glutamate: step 1/2. Its function is as follows. Catalyzes the transfer of a phosphate group to glutamate to form L-glutamate 5-phosphate. In Streptococcus pyogenes serotype M49 (strain NZ131), this protein is Glutamate 5-kinase.